A 256-amino-acid polypeptide reads, in one-letter code: Hydroxyacylglutathione hydrolase (256 aa).

Residues H55, H57, D59, H60, H113, D130, and H168 each coordinate Zn(2+).

Belongs to the metallo-beta-lactamase superfamily. Glyoxalase II family. As to quaternary structure, monomer. Zn(2+) is required as a cofactor.

It carries out the reaction an S-(2-hydroxyacyl)glutathione + H2O = a 2-hydroxy carboxylate + glutathione + H(+). It functions in the pathway secondary metabolite metabolism; methylglyoxal degradation; (R)-lactate from methylglyoxal: step 2/2. Thiolesterase that catalyzes the hydrolysis of S-D-lactoyl-glutathione to form glutathione and D-lactic acid. The chain is Hydroxyacylglutathione hydrolase from Psychromonas ingrahamii (strain DSM 17664 / CCUG 51855 / 37).